Reading from the N-terminus, the 267-residue chain is 5'-nucleotidase SurE (267 aa).

A divalent metal cation contacts are provided by aspartate 9, aspartate 10, serine 40, and asparagine 97.

Belongs to the SurE nucleotidase family. Requires a divalent metal cation as cofactor.

Its subcellular location is the cytoplasm. The catalysed reaction is a ribonucleoside 5'-phosphate + H2O = a ribonucleoside + phosphate. In terms of biological role, nucleotidase that shows phosphatase activity on nucleoside 5'-monophosphates. In Helicobacter pylori (strain G27), this protein is 5'-nucleotidase SurE.